The following is a 229-amino-acid chain: MKTIEHELYYEFRIADDVKMIYTKKPFNLKLKELSNDNFNFVPRSKKIKYLKQLHTDIIYKVEDDFINFQEGDGLISSSLDVALVAYFADCLPIYFYDSVKKIIGLIHSGYKGSFNLIILKMLFMFEKMGSALKDLKIVFGPYNRSCCYEVSEIFLKEVSNKFSKDLLNASFVTRDGKIYFDNASFNLNLLSSFNLNIYNSKLCTYCLKNLYSYRRLRESQSYALIWRI.

The Zn(2+) site is built by His55, Cys91, and His108.

The protein belongs to the purine nucleoside phosphorylase YfiH/LACC1 family. In terms of assembly, homodimer. Cu(2+) serves as cofactor. Requires Zn(2+) as cofactor.

It carries out the reaction adenosine + phosphate = alpha-D-ribose 1-phosphate + adenine. The catalysed reaction is S-methyl-5'-thioadenosine + phosphate = 5-(methylsulfanyl)-alpha-D-ribose 1-phosphate + adenine. It catalyses the reaction inosine + phosphate = alpha-D-ribose 1-phosphate + hypoxanthine. The enzyme catalyses adenosine + H2O + H(+) = inosine + NH4(+). Purine nucleoside enzyme that catalyzes the phosphorolysis of adenosine and inosine nucleosides, yielding D-ribose 1-phosphate and the respective free bases, adenine and hypoxanthine. Also catalyzes the phosphorolysis of S-methyl-5'-thioadenosine into adenine and S-methyl-5-thio-alpha-D-ribose 1-phosphate. Also has adenosine deaminase activity. The chain is Purine nucleoside phosphorylase BB_0467 from Borreliella burgdorferi (strain ATCC 35210 / DSM 4680 / CIP 102532 / B31) (Borrelia burgdorferi).